We begin with the raw amino-acid sequence, 37 residues long: Large ribosomal subunit protein bL36 (37 aa).

It belongs to the bacterial ribosomal protein bL36 family.

The polypeptide is Large ribosomal subunit protein bL36 (Nitratidesulfovibrio vulgaris (strain ATCC 29579 / DSM 644 / CCUG 34227 / NCIMB 8303 / VKM B-1760 / Hildenborough) (Desulfovibrio vulgaris)).